Consider the following 44-residue polypeptide: pyr operon leader peptide (44 aa).

The protein is pyr operon leader peptide (pyrL) of Escherichia coli O157:H7.